We begin with the raw amino-acid sequence, 546 residues long: DNA replication factor Cdt1 (546 aa).

A compositionally biased stretch (basic and acidic residues) spans 1–11 (MEQRRVTDFFA). Residues 1–23 (MEQRRVTDFFARRRPGPPRIAPP) carry the PIP-box K+4 motif motif. 2 disordered regions span residues 1 to 118 (MEQR…QDQD) and 143 to 165 (SAQD…PCGE). Residues 28–45 (RTPSPARPALRAPASATS) show a composition bias toward low complexity. T29 bears the Phosphothreonine; by MAPK8 mark. S31 bears the Phosphoserine mark. A Cyclin-binding motif motif is present at residues 68–70 (RRL). S93 carries the post-translational modification Phosphoserine; by MAPK8. Residues 150 to 190 (SCTPEAEGRPEEPCGEKAPAYQRFHALAQPGLPGLVLPYKY) form an interaction with GMNN region. Positions 155 to 164 (AEGRPEEPCG) are enriched in basic and acidic residues. A Phosphoserine; by MAPK8 modification is found at S318. Residues S380 and S394 each carry the phosphoserine modification. The disordered stretch occupies residues 383–415 (ALRSAAPSSPGSPRPALPATPPATPPAASPSAL). Residues 392–410 (PGSPRPALPATPPATPPAA) show a composition bias toward pro residues. The tract at residues 451–546 (LERLPELARV…AHQTRAEEGL (96 aa)) is interaction with LRWD1.

Belongs to the Cdt1 family. In terms of assembly, interacts with GMNN; the interaction inhibits binding of the MCM complex to origins of replication. Interacts with MCM6. Interacts with CDC6; are mutually dependent on one another for loading MCM complexes onto chromatin. Interacts with PCNA. Interacts with LRWD1 during G1 phase and during mitosis. Interacts with NDC80 subunit of the NDC80 complex; leading to kinetochore localization. Interacts with GRWD1; origin binding of GRWD1 is dependent on CDT1. Interacts with KAT7. Interacts with ubiquitin-binding protein FAF1; the interaction is likely to promote CDT1 degradation. Post-translationally, two independent E3 ubiquitin ligase complexes, SCF(SKP2) and the DCX(DTL) complex, mediated CDT1 degradation in S phase. Ubiquitinated by the DCX(DTL) complex, in response to DNA damage, leading to its degradation. Ubiquitination by the DCX(DTL) complex is necessary to ensure proper cell cycle regulation and is PCNA-dependent: interacts with PCNA via its PIP-box, while the presence of the containing the 'K+4' motif in the PIP box, recruit the DCX(DTL) complex, leading to its degradation. Phosphorylation at Thr-29 by CDK2 targets CDT1 for ubiquitination by SCF(SKP2) E3 ubiquitin ligase and subsequent degradation. The interaction with GMNN protects it against ubiquitination. Deubiquitinated by USP37. Ubiquitinated and degraded by the SCF(FBXO31) complex during the G2 phase to prevent re-replication. Phosphorylation by cyclin A-dependent kinases at Thr-29 targets CDT1 for ubiquitynation by SCF(SKP2) E3 ubiquitin ligase and subsequent degradation. Phosphorylated at Thr-29 by MAPK8/JNK1, which blocks replication licensing in response to stress. Binding to GMNN is not affected by phosphorylation.

It localises to the nucleus. It is found in the chromosome. The protein resides in the centromere. Its subcellular location is the kinetochore. Its function is as follows. Required for both DNA replication and mitosis. DNA replication licensing factor, required for pre-replication complex assembly. Cooperates with CDC6 and the origin recognition complex (ORC) during G1 phase of the cell cycle to promote the loading of the mini-chromosome maintenance (MCM) complex onto DNA to generate pre-replication complexes (pre-RC). Required also for mitosis by promoting stable kinetochore-microtubule attachments. Potential oncogene. In Homo sapiens (Human), this protein is DNA replication factor Cdt1.